A 184-amino-acid chain; its full sequence is ATP synthase subunit b, chloroplastic (184 aa).

A helical membrane pass occupies residues 27–49; the sequence is LATNPINLSVVFGVLIFFGKGVL.

It belongs to the ATPase B chain family. F-type ATPases have 2 components, F(1) - the catalytic core - and F(0) - the membrane proton channel. F(1) has five subunits: alpha(3), beta(3), gamma(1), delta(1), epsilon(1). F(0) has four main subunits: a(1), b(1), b'(1) and c(10-14). The alpha and beta chains form an alternating ring which encloses part of the gamma chain. F(1) is attached to F(0) by a central stalk formed by the gamma and epsilon chains, while a peripheral stalk is formed by the delta, b and b' chains.

Its subcellular location is the plastid. The protein localises to the chloroplast thylakoid membrane. F(1)F(0) ATP synthase produces ATP from ADP in the presence of a proton or sodium gradient. F-type ATPases consist of two structural domains, F(1) containing the extramembraneous catalytic core and F(0) containing the membrane proton channel, linked together by a central stalk and a peripheral stalk. During catalysis, ATP synthesis in the catalytic domain of F(1) is coupled via a rotary mechanism of the central stalk subunits to proton translocation. In terms of biological role, component of the F(0) channel, it forms part of the peripheral stalk, linking F(1) to F(0). The polypeptide is ATP synthase subunit b, chloroplastic (Nasturtium officinale (Watercress)).